A 279-amino-acid polypeptide reads, in one-letter code: Oxygen-dependent coproporphyrinogen-III oxidase (279 aa).

Position 102 (Ser102) interacts with substrate. His106 and His116 together coordinate a divalent metal cation. His116 (proton donor) is an active-site residue. 118–120 (NTR) contacts substrate. Residues His149 and His179 each coordinate a divalent metal cation. The segment at 244–279 (YVEFNLLYDRGTKFGLMTDGNVEAILMSLPPEVKFN) is important for dimerization.

The protein belongs to the aerobic coproporphyrinogen-III oxidase family. As to quaternary structure, homodimer. It depends on a divalent metal cation as a cofactor.

It localises to the cytoplasm. The catalysed reaction is coproporphyrinogen III + O2 + 2 H(+) = protoporphyrinogen IX + 2 CO2 + 2 H2O. It functions in the pathway porphyrin-containing compound metabolism; protoporphyrin-IX biosynthesis; protoporphyrinogen-IX from coproporphyrinogen-III (O2 route): step 1/1. Involved in the heme biosynthesis. Catalyzes the aerobic oxidative decarboxylation of propionate groups of rings A and B of coproporphyrinogen-III to yield the vinyl groups in protoporphyrinogen-IX. This is Oxygen-dependent coproporphyrinogen-III oxidase from Rickettsia africae (strain ESF-5).